The sequence spans 335 residues: tRNA N6-adenosine threonylcarbamoyltransferase (335 aa).

Fe cation is bound by residues histidine 111, histidine 115, and tyrosine 132. Residues 132–136 (YVSGG), aspartate 164, glycine 177, glutamate 181, and asparagine 260 contribute to the substrate site. Aspartate 288 contributes to the Fe cation binding site.

The protein belongs to the KAE1 / TsaD family. Monomer. Component of the KEOPS complex that consists of Kae1, Bud32, Cgi121 and Pcc1; the whole complex dimerizes. Fe(2+) serves as cofactor.

The protein resides in the cytoplasm. The catalysed reaction is L-threonylcarbamoyladenylate + adenosine(37) in tRNA = N(6)-L-threonylcarbamoyladenosine(37) in tRNA + AMP + H(+). In terms of biological role, required for the formation of a threonylcarbamoyl group on adenosine at position 37 (t(6)A37) in tRNAs that read codons beginning with adenine. Is a component of the KEOPS complex that is probably involved in the transfer of the threonylcarbamoyl moiety of threonylcarbamoyl-AMP (TC-AMP) to the N6 group of A37. Kae1 likely plays a direct catalytic role in this reaction, but requires other protein(s) of the complex to fulfill this activity. In Methanococcoides burtonii (strain DSM 6242 / NBRC 107633 / OCM 468 / ACE-M), this protein is tRNA N6-adenosine threonylcarbamoyltransferase.